Consider the following 467-residue polypeptide: MKKHIFEDIILQNALNFTREMMNVFEDLLKNGMNITELVARIKELTDKLGREAIEAIIEELDRIIKEDKRRKEKWVVERKDKKRLTTVLGDIEYERTYYKSREDGRYTYLVDDALEIGRHERIEKGVKIKLVENAIEESYEKSSEKACPEKISKQTVLNAIREIGEVEVKREIKEKKEVRVLYIEADEDHVPLQDGSSETPRLIYIHEGREEKNGRNVLKNVYYKAYVGEKAEDIWIDVANYIEENYKEEKIEKIYIAGDGAPWIKEGLEWIVKSRFVLDRYHLNKYVLKATSKEPKYRDKIWRAINEGDKEGVKKIFGELIKIAKEEKEKEKIKEAKRYILNNWEGIKIYSEDEDVIGCSAEGHISHVFSARLSRNPLGWSREGLKLMAKLRVFSKNGGDLREVEWGKKKNINAGSYKLTEKQIKEAVRRVKTSTNEKINNITVLNIGKVTPIYRVLRALKYAQVI.

The protein belongs to the UPF0236 family.

In Caldanaerobacter subterraneus subsp. tengcongensis (strain DSM 15242 / JCM 11007 / NBRC 100824 / MB4) (Thermoanaerobacter tengcongensis), this protein is UPF0236 protein TTE0033/TTE0744/TTE0838/TTE0852/TTE1082/TTE1247/TTE1519/TTE1678/TTE1739/TTE1823/TTE2212.